Consider the following 4118-residue polypeptide: MNRNFNNINNNNNNNNNYHGYQYHQQQQQQNQQQQQQQYNNNVIKYLWNTYTQTVVYQDSLFNLVEFLQFFTLNYYNDTIGDLLFLSNGTLTDITRHLSKHLIEEIGYSCTLLNQQQQTQQTQTQTQSKQQTIPQLSLNNSIPTSFTTTASSTNTTPNAGLKLAEYEIYQYLIGYSTAGEGPLVLAALDILSRQSPNGIPLSFLNFLITILLRILSLPPELLYNNNNNDNNNNINNFSGNNNNNFNNNNHYFNNNHNNHNHHYQHHQLKEKKKNVNKQHFKPIESFFYLQPLPSSLSDMFRDDDYASLSSSYGGGGNLTPLSLSSNHAFSPPLSSLKNSSSNTFTKPSSSTTTTTTTTTQTPTPNSNTDSKQNKDNNNSKNNNKEVSSVVLLGYQILKIVENLVKDKLFLYELVTSDCFSQLLNIFYKLPILSTTASSLPPNSSFSIIYQQLSQIFAQIMSKSCLSSDTIVLIHNFKLIKNLLNIMDKLKEKDEYNMNLIIELNKIILFSIKSSTSITKLLHDDFTKANGYSILLNSMIFISDYGTLKNKIDYIQTTTNLLFIGHRSSYLDKANTKMFEIYLNVFSISTSEETKTELLKCIKGVFYTSLIEESSSSSSLIISSSDNNNNNNNNSDGVNDDKNNNNNNRDNIIFEDVIDMDGNDSYLIFHQFQPFTILFSQFDTLNINNRRMILDMMDVLLTKNRISLNELKEYCNLFKSELPSTVLLVSQHLTELLTKGKVSCDVLGRDLSLTQKLLEFLVNDPTTLRFSSILLQNETELQLCFSILSTNNNNNNSSSKYYSNNIQQQQQQQQQQQQQQKKRHVSRYLVLYMIVTEILSLLLELLVPPSIQTIFIQECQGLKLLYPMLLDEYLIQPALKVIASIAIGGLQLESRIIPDLIMELQNNGGGATNLDSKVLTMRKNIFSSMCYIFHNNPNSKNSFRNFQGFTWSLSILDGISRYLISIDNNNNNSSNNNSNDNLNDFKESLDHSCNGVLNSNNSSNNSNLNGGIGNEIKKSSFNEIFYFLKVLIDMLSAAMKNNSINQEYFRKEIIIISRSLKQCKYMEGIHAISLCDSLLNMAITGSWPPSCENHSLEEGSLFSLYSPITSFFPINTTLSKNFDISFILKFEKKEQMEQQLKQQILLNSNNNINNGNGGSISPSSIINNMNSPGGGSSSSNDSLKSPTRRSRSYTNDFHLDKSSRIPHPPDFNNNNDTMNYDYNFQDDYIESLNSKSSSSFSLDLASVTGDSEIVYYGGSTTSRMIHSPGLPSSSLQALSSNSTKLPEKSSLQLAQERYICCQSCRDTLTLEMPEIFKLIIELMSSDDDISQTEIKSSCYIIRELIFLTNCSLANQKRLSSLLIDIITHFKPLLLSIILYQKQQQQQQQQQQQSNSNSNSNSTIILKKKINNETSTKLKPLLLDLIQTLAGHNLTLIEFRKYFELLKVKDSNNQFIYPIDLLNLLLKISSNRDNIPLYYAELSKHGLEYIDFPSWGERTWPPTKGFGISFWFRYSLPCLNINKSPIYLLSIEGSIGNSSTKSCECQLILENGKLVYKIYHFSGICETYHFSDHKFEPDQFYHISISHSSLLSTTTTTATTANTTTNSTTASTTTTTTNSTTAVSSTTNSISTTAAVAAITTSDGNSGISRENSLGGRDSIGSNSSSSSSSSNSGVSSGSSTNLNKKSPVKLYVNGCLRGQILANYPKSNSMTLYIRFGGVNAASSVISNNQDVQSFNVNNSWNLGNAYFFEEVPLDKEIFYLYLLGPNHFRGLKVDLSAVDSIQPSLDKVSNLHPFLIDHLLNPTVQPLLSLHEKIMYIFTAKCLYVTTHRITNKTESVTHASALPQLSTILFQQQQLQQQQLQQQITNSTTSILNELNLSNSINLIRRGSENSLITSSSSSSLSLSLSSNTNNNNNNNTRSSLERSISGNFLQSPSSSNNNLRERSINNNNNNNNNSNNNNNNNSISSSTSSLSSSVISLVAGAMAVPSPPSPNKLGSGINGSSILNASLTTLSISTNNNSNNSNNSNSNNNNNNNNTNYNSNSLNNSLNHQALSLLHTGLPIALPRGVISQIGVKDAIMNSGGVSVIIYLIAMAEDKEYQRSGLKLLQSIIHNSQLNLKDMKEISGYQLVSFLIRKKNWVLDDQLLSILFSFVGIQSTRTSIHYVDGVVQDVLALKHFLLERSIWRRASLIDQKKLFESLEKLVNVLHENHEFNIIKFRQAGAYETILKMCREDDLPLELLSTLTKILRSITTNKSNKLKDDLQLILSWLLETMPKQQIFKKYNSFNGLNSTNNSNNNNNNPISLFRKGRKTLLQVQFDNHQLYLQQQQQQNLIPQVNSNNNNEESNNGIEGIIRINILNLLLDILSKTELSVVEDFHSICSLETIFGLLTCESMVSRVMFLKIIDIFLHSQMIFGHFQKMKGFHLLGHQLLPFETSEKIFGVLFCILFGKPSNSDILEGLSMRMYFLSHLSDAEMKYPGAIVTILIILCNSNSTTQHNVIKMIHNIFLQNDQFKQSLLDNELIPRLVDILSSNYQRRGSSSSSTNSTTNNNNNNSSTTTTSNNNNNNNENNNEDDWVAEESILSLLKEIALYGAKSQDGSAALLRDILVVLHLNTRMDYDYICCLQRRVLFDVISFFNDNIHSFSSIDSLVSSFEKLCVLTIHTLSYQEKLLLTNGTGTGGGTGGSGGGLLTKKSFRSNLFSPSRSKEKEKEKEKEKEKEKEKEKERERERETTNVTSDSDNILSANDIFYGDQSNEESSTTDSDSTSDNNNNNNRNSYSGRNIRGNGINNNNNKNKFIPIWIKEGNLLDQEEFIRSLLKVLSKSKIPQSNTTYRNLFSTQYSARSLLCKFIFILLTFDEFKDYYLMVLQELSNMVPSLSNTPISSSPIISPINNNNNYYNTNSNTNSNSSTPSLFSITSNNNNNNNNNNNNNNNNNNNNNTNSTNQTITDTTLSPASSNVSISNQSTPISNNNNNNNSSGGGSGGSNINIPPTINISDSNSNSNEQQGISSVLSEIIMEEDFILVLLHITHKFLQSGNDYEIQRNSFRLWVSIIQHCSQVDYVKKAFDTTTTSLAVLSSSQEIRDLLIRYQQIYVENEFKKWEEKFNQSKKEWKLQYFETQKNKQSMITKNQDITKSTKKLSDSLIQLKSEYEKSNYQYLIENRESKRFFQSQWKLLIKKVTHEKAIWSPNYEISNSSSTNITTTTTTTTTAKKWKLDPTEGLNRMRMRLKVISDNTSNSHIPLIPDLSTPSTPPSPQNTKDQLLFNFNNYNNNNNNNNNNGLNAPPLHGSLDYSSFDNLKLGEKVNEVFKCSCISPFYQRDGELLIGDQNVYFLDELLTSADRKKTTASTVGGSNNNNNNNNNNNNNNNNNNNNSNDTTSSINSTTATNTNTTNTTTTNTTTTTTTTNGLSNIVKPPQRGKHITWSYDDIIEIHKRRHVLKNNAIEIFLGSGVPHKTYLFAFNKPSDRDIVYDLIMSKPLPNRVDYAAEVHGNILKMSITKKWQSGLISNFEYLMHLNTLAGRSFNDLTQYPIFPFILRDYESEVLDLENPNTFRDFTKPMGAQDPKRLEKFIEKYNDLLEMNEKPYHYGSHYSNIGSVLHFLVRLQPFTSYFIDFQGGRFDVPDRAFHSIAQSWNLSSSISNSDVKELIPEFFYLSDFLVNSNKFFMGIKQNGVKVDDVILPPWAHNDPRLFIKKHNEALECKYVSENLHHWIDLLFGYKQQGEAAVKAHNMFFPLTYEGAVDIDSIEDQLNRDAAVAQIHSYGQTPKQIFTKPHPKKNWSKTIRLTQDSIFTKPERLTSYIMFQYRSPIGSITIANDSSPIHLTPQRILFFPDNNKSISWGHWDQNLRVNSIDTGKVLSIIEVLNDDIICGDITKNGRLFVTGGTAGTVKVWKRCNNDGTIMTRKERGDNLSLWSTLYGHTNSILCVTVSQEYSIIVSGSKDSNCIIWDLNRLTYINSLQHDHPVTCVQVSPTFGYIATFETNIYNKQNNNSGGGGSKNDNSINGSGCLRLWSINGTLLAKQNFVNDRVNCMIFTSTIQGVNTNLLITGMESGTIILWNAWNLQKIRTLVSKSTITALAVSKDNTQLISGDINGLIECLSSRSFDGYSSIVLG.

Residues 1-35 (MNRNFNNINNNNNNNNNYHGYQYHQQQQQQNQQQQ) form a disordered region. The helical transmembrane segment at 198-218 (GIPLSFLNFLITILLRILSLP) threads the bilayer. The segment covering 236 to 257 (NFSGNNNNNFNNNNHYFNNNHN) has biased composition (low complexity). Disordered regions lie at residues 236–267 (NFSG…QHHQ), 332–382 (PLSS…SKNN), and 621–644 (ISSS…KNNN). The segment covering 258-267 (NHNHHYQHHQ) has biased composition (basic residues). 2 stretches are compositionally biased toward low complexity: residues 332 to 381 (PLSS…NSKN) and 621 to 636 (ISSS…NSDG). Residues 827 to 847 (YLVLYMIVTEILSLLLELLVP) traverse the membrane as a helical segment. Over residues 1155-1170 (NGGSISPSSIINNMNS) the composition is skewed to low complexity. Disordered regions lie at residues 1155–1213 (NGGS…FNNN), 1599–1622 (ANTT…TAVS), 1643–1681 (NSGI…STNL), 1928–1968 (GNFL…ISSS), 2015–2044 (STNN…SNSL), 2537–2574 (RRGS…NNNE), 2702–2741 (FSPS…TSDS), 2754–2791 (DQSN…NGIN), 2902–3007 (NTNS…NSNE), 3245–3265 (PLIP…TKDQ), and 3348–3418 (KTTA…NIVK). 2 stretches are compositionally biased toward low complexity: residues 1657-1678 (SIGS…SGSS) and 1935-1968 (SSSN…ISSS). Residues 2540–2571 (SSSSSTNSTTNNNNNNSSTTTTSNNNNNNNEN) are compositionally biased toward low complexity. Residues 2705–2738 (SRSKEKEKEKEKEKEKEKEKEKERERERETTNVT) adopt a coiled-coil conformation. The segment covering 2706–2734 (RSKEKEKEKEKEKEKEKEKEKERERERET) has biased composition (basic and acidic residues). Composition is skewed to low complexity over residues 2758–2791 (EESS…NGIN) and 2902–2947 (NTNS…NSTN). Residues 2948 to 2962 (QTITDTTLSPASSNV) are compositionally biased toward polar residues. Low complexity-rich tracts occupy residues 2963–2980 (SISN…NNNS) and 2988–3006 (SNIN…SNSN). Residues 3303–3479 (KLGEKVNEVF…DRDIVYDLIM (177 aa)) enclose the BEACH-type PH domain. Over residues 3357–3411 (SNNNNNNNNNNNNNNNNNNNNSNDTTSSINSTTATNTNTTNTTTTNTTTTTTTTN) the composition is skewed to low complexity. One can recognise a BEACH domain in the interval 3491–3782 (AEVHGNILKM…QIFTKPHPKK (292 aa)). 5 WD repeats span residues 3868–3907 (VLND…GTIM), 3924–3963 (GHTN…YINS), 3984–4027 (TFET…LAKQ), 4029–4073 (FVND…KIRT), and 4075–4114 (VSKS…GYSS).

The protein localises to the membrane. It is found in the lysosome. Its subcellular location is the endosome. In terms of biological role, involved in negative regulation of lysosome biogenesis, by limiting the heterotypic fusion of early endosomes and postlysosomal compartments. In Dictyostelium discoideum (Social amoeba), this protein is BEACH domain-containing protein lvsB (lvsB).